The chain runs to 260 residues: Achaete-scute homolog 2 (260 aa).

Disordered stretches follow at residues 85-126 (AGAC…RNER) and 191-239 (PATR…EDSS). Low complexity-rich tracts occupy residues 110 to 121 (ATEASSSSAAVA) and 200 to 218 (TQPS…STSP). The 53-residue stretch at 118–170 (AAVARRNERERNRVKLVNLGFQALRQHVPHGGANKKLSKVETLRSAVEYIRAL) folds into the bHLH domain.

As to quaternary structure, efficient DNA binding requires dimerization with another bHLH protein. Forms heterodimers with bHLH transcription factor TCF3. May not heterodimerise with bHLH protein HAND1. In terms of tissue distribution, expressed in Schwann cells in the peripheral nerve (at protein level). Also expressed by endothelial cells (at protein level). May be expressed in neuronal precursor cells.

The protein localises to the nucleus. It localises to the cytoplasm. Functionally, transcription factor. Binds to E-box motifs 5'-CANNTG-3' in the regulatory elements of target genes, probably as a heterodimer with another basic helix-loop-helix (bHLH) protein such as the transcription factor TCF3. May bind both open and closed chromatin, acting as a pioneer transcription factor to allow other factors to bind and activate lineage-specific genes. Required during post-implantation development for the generation of some differentiated trophoblast cell types. Transcriptional activity of ASCL2 may be antagonised in a subset of trophoblast cells by bHLH transcription factor HAND1, perhaps by competing for dimerization with other bHLH proteins. Involved in differentiation and function of follicular T-helper (Tfh) cells, thereby playing a role in germinal center responses; probably modulates expression of genes involved in Tfh cell function, such as BCL6. May also act as a suppressor of Th1-, Th2- and Th17-cell differentiation. Induces the formation of stem cells in intestinal crypts in vitro, synergistically activating transcription of target genes, such as SOX9, together with TCF4/beta-catenin. May form a bistable transcriptional switch, controlling expression of its own gene together with Wnt/R-spondin signaling, and thereby maintaining stem cell characteristics. Modulates expression of target genes, including perhaps down-regulating EGR1/Krox24 and chemokine CXCL10/Mob-1 and up-regulating CXCR4 and CDKN1C/p57kip2, in Schwann cells. May play a role in reducing proliferation of Schwann cells, perhaps acting via modulation of expression of CDKN1C. May be dispensable for blastocyst formation and later embryonic function. May be involved in the determination of neuronal precursors. The polypeptide is Achaete-scute homolog 2 (Ascl2) (Rattus norvegicus (Rat)).